A 213-amino-acid polypeptide reads, in one-letter code: Large ribosomal subunit protein uL1 (213 aa).

This sequence belongs to the universal ribosomal protein uL1 family. In terms of assembly, part of the 50S ribosomal subunit.

Functionally, probably involved in E site tRNA release. Binds directly to 23S rRNA. Protein L1 is also a translational repressor protein, it controls the translation of its operon by binding to its mRNA. The sequence is that of Large ribosomal subunit protein uL1 from Methanothermococcus thermolithotrophicus (Methanococcus thermolithotrophicus).